The primary structure comprises 680 residues: Leucine-rich repeat protein soc-2 homolog (680 aa).

A compositionally biased stretch (low complexity) spans 1-19 (MNLCSSGATASTTSLSSTG). Disordered regions lie at residues 1-54 (MNLC…SDVS) and 73-149 (TGTE…PIQA). The segment covering 26–49 (GVPGGGAEGGGGGGGSGNSGGGGK) has biased composition (gly residues). Positions 73–86 (TGTEELSNANSPAN) are enriched in low complexity. The span at 87-96 (GAGGASGSTG) shows a compositional bias: gly residues. Positions 97 to 106 (SGQQPTGSNG) are enriched in low complexity. LRR repeat units lie at residues 161–182 (RIKR…VKEC), 184–205 (HLTE…IGCL), 207–228 (SLRN…LQNC), 230–251 (QLKV…IYRL), 253–274 (SLTT…LRQL), 276–297 (NLTM…IGAL), 299–320 (NLTT…IGNC), 322–343 (NLSA…IGNL), 345–367 (SLVR…KNCK), 368–389 (SMDE…MLAS), 392–413 (GLTT…GPAQ), 416–437 (NVYS…IFSR), 440–461 (GLTK…IGTW), 463–484 (NMVE…IMNL), 486–507 (NLEI…IGNL), 509–530 (RLRI…IGLL), 532–553 (ELQR…IGHL), 555–576 (NLTH…IGSL), 578–600 (SLEN…LALC), and 602–623 (NLKY…IQAG). Positions 658–668 (AGGNGGGGAAA) are enriched in gly residues. The interval 658–680 (AGGNGGGGAAAAGGSASRSSDRR) is disordered. The segment covering 669–680 (AGGSASRSSDRR) has biased composition (low complexity).

This sequence belongs to the SHOC2 family.

Functionally, acts as a Ras effector and participates in MAPK pathway activation. Probably acts as a regulatory subunit of protein phosphatase that specifically dephosphorylates Raf kinase and stimulate Raf activity at specialized signaling complexes upon Ras activation. The protein is Leucine-rich repeat protein soc-2 homolog (Sur-8) of Drosophila simulans (Fruit fly).